The sequence spans 448 residues: Glucose-6-phosphate isomerase (448 aa).

Catalysis depends on glutamate 290, which acts as the Proton donor. Active-site residues include histidine 311 and lysine 425.

It belongs to the GPI family.

The protein localises to the cytoplasm. The enzyme catalyses alpha-D-glucose 6-phosphate = beta-D-fructose 6-phosphate. The protein operates within carbohydrate biosynthesis; gluconeogenesis. It participates in carbohydrate degradation; glycolysis; D-glyceraldehyde 3-phosphate and glycerone phosphate from D-glucose: step 2/4. Catalyzes the reversible isomerization of glucose-6-phosphate to fructose-6-phosphate. The polypeptide is Glucose-6-phosphate isomerase (Lactococcus lactis subsp. cremoris (strain SK11)).